The chain runs to 167 residues: GTP-dependent dephospho-CoA kinase (167 aa).

5 residues coordinate GTP: Asp39, Val41, Asp58, Lys60, and Glu117.

The protein belongs to the GTP-dependent DPCK family.

It carries out the reaction 3'-dephospho-CoA + GTP = GDP + CoA + H(+). Its pathway is cofactor biosynthesis; coenzyme A biosynthesis. In terms of biological role, catalyzes the GTP-dependent phosphorylation of the 3'-hydroxyl group of dephosphocoenzyme A to form coenzyme A (CoA). This chain is GTP-dependent dephospho-CoA kinase, found in Korarchaeum cryptofilum (strain OPF8).